The primary structure comprises 1037 residues: Ribonuclease E (1037 aa).

3 disordered regions span residues 1–23 (MAED…LPER), 47–90 (FDGR…ETPV), and 106–369 (VSEA…PILS). A compositionally biased stretch (basic and acidic residues) spans 47–67 (FDGRQRSAHSTVDKADAERVR). Composition is skewed to low complexity over residues 68–90 (AALT…ETPV) and 106–126 (VSEA…PAAE). Composition is skewed to acidic residues over residues 127–141 (AEAE…EAET) and 196–226 (VVDD…DDDQ). Over residues 230–242 (PRRRRRGRRGRGR) the composition is skewed to basic residues. The span at 248-284 (NDDATSDADTDSTEDQTDGDEQESGEDSDDSGDEDST) shows a compositional bias: acidic residues. The span at 291–301 (RRRRRRRRRKS) shows a compositional bias: basic residues. Residues 320–335 (VHERAPRTERSDKSDD) are compositionally biased toward basic and acidic residues. In terms of domain architecture, S1 motif spans 427–504 (GNIYLGIVQN…GHKGARLTTQ (78 aa)). Positions 561–589 (EDIRSDVERLQKRWSEIEAKAAEVTEKKA) form a coiled coil. Mg(2+) contacts are provided by D694 and D738. Residues C796 and C799 each coordinate Zn(2+). Residues 810–1037 (PIDSASSNGG…ARPAGPPSHD (228 aa)) are disordered. Residues 834–843 (RRGKRGKKGA) show a composition bias toward basic residues. Basic and acidic residues predominate over residues 844–864 (ARTEEVHVAKVPDHTPGEHPM). A compositionally biased stretch (acidic residues) spans 879-891 (EDHEDHEDHETAE). Residues 897-913 (EVRDDTRDEHDADERAH) are compositionally biased toward basic and acidic residues. A compositionally biased stretch (acidic residues) spans 923–1006 (GDEDLDDSDE…DSDSDEDEEP (84 aa)).

The protein belongs to the RNase E/G family. In terms of assembly, assembles into a homotetramer formed by a dimer of dimers. Interacts with DNA-binding protein HhupB. It depends on Mg(2+) as a cofactor. Zn(2+) serves as cofactor.

The protein resides in the cytoplasm. The enzyme catalyses Endonucleolytic cleavage of single-stranded RNA in A- and U-rich regions.. In terms of biological role, endoribonuclease that plays a central role in RNA processing and decay. Plays a major role in pre-16S rRNA maturation, probably generating the mature 5'-end, and a minor role in pre-5S and pre-23S rRNA maturation. Probably also processes tRNA. RNase E and HupB jointly contribute to cellular adaptation to changing growth conditions and survival during antibiotic treatment. Overexpression or depletion leads to changes in gene expression; overexpression induces metabolic slowdown and cell stress while depleted strains grow less well than induced strains. The sequence is that of Ribonuclease E (rne) from Mycolicibacterium smegmatis (strain ATCC 700084 / mc(2)155) (Mycobacterium smegmatis).